Here is a 265-residue protein sequence, read N- to C-terminus: Undecaprenyl-diphosphatase (265 aa).

The next 8 helical transmembrane spans lie at 1 to 21, 39 to 59, 87 to 107, 110 to 130, 144 to 164, 187 to 207, 217 to 237, and 244 to 264; these read MDFL…FLPI, QGVG…ILYF, WAVV…LDYI, ALRA…LLAA, IGFK…IPGT, FSFF…LLTI, LGFL…IHFF, and FGMW…YLLF.

The protein belongs to the UppP family.

It localises to the cell inner membrane. It catalyses the reaction di-trans,octa-cis-undecaprenyl diphosphate + H2O = di-trans,octa-cis-undecaprenyl phosphate + phosphate + H(+). Functionally, catalyzes the dephosphorylation of undecaprenyl diphosphate (UPP). Confers resistance to bacitracin. The polypeptide is Undecaprenyl-diphosphatase (Idiomarina loihiensis (strain ATCC BAA-735 / DSM 15497 / L2-TR)).